The primary structure comprises 427 residues: Trigger factor (427 aa).

Positions G163–P248 constitute a PPIase FKBP-type domain.

Belongs to the FKBP-type PPIase family. Tig subfamily.

It is found in the cytoplasm. It carries out the reaction [protein]-peptidylproline (omega=180) = [protein]-peptidylproline (omega=0). Involved in protein export. Acts as a chaperone by maintaining the newly synthesized protein in an open conformation. Functions as a peptidyl-prolyl cis-trans isomerase. The chain is Trigger factor from Streptococcus pneumoniae serotype 2 (strain D39 / NCTC 7466).